Consider the following 125-residue polypeptide: MKKLIAKTKEELIEKIKECENEEEIYINLELDRDVAIALLESCEPKKIYLPKSKYKRSSKKIIKALEGVDVEVIPIKAKTGRPTNVDKIIKKYLDKKPKEIAEITGINIKTVEYHYYKLKKKEKQ.

This is an uncharacterized protein from Methanocaldococcus jannaschii (strain ATCC 43067 / DSM 2661 / JAL-1 / JCM 10045 / NBRC 100440) (Methanococcus jannaschii).